A 302-amino-acid chain; its full sequence is Orotidine 5'-phosphate decarboxylase (302 aa).

Lys-105 functions as the Proton donor in the catalytic mechanism.

Belongs to the OMP decarboxylase family. Type 2 subfamily.

It catalyses the reaction orotidine 5'-phosphate + H(+) = UMP + CO2. It functions in the pathway pyrimidine metabolism; UMP biosynthesis via de novo pathway; UMP from orotate: step 2/2. The polypeptide is Orotidine 5'-phosphate decarboxylase (Rhodopirellula baltica (strain DSM 10527 / NCIMB 13988 / SH1)).